The primary structure comprises 137 residues: Small ribosomal subunit protein bS6 (137 aa).

Positions 96–137 (VTEQSIMLKQKEERAERAPRRDDREERAPRREEEAKPEAAAE) are disordered. Positions 104 to 137 (KQKEERAERAPRRDDREERAPRREEEAKPEAAAE) are enriched in basic and acidic residues.

This sequence belongs to the bacterial ribosomal protein bS6 family.

Its function is as follows. Binds together with bS18 to 16S ribosomal RNA. The protein is Small ribosomal subunit protein bS6 of Vibrio atlanticus (strain LGP32) (Vibrio splendidus (strain Mel32)).